Here is a 557-residue protein sequence, read N- to C-terminus: Formate--tetrahydrofolate ligase 2 (557 aa).

66-73 is a binding site for ATP; the sequence is TPAGEGKT.

Belongs to the formate--tetrahydrofolate ligase family.

The catalysed reaction is (6S)-5,6,7,8-tetrahydrofolate + formate + ATP = (6R)-10-formyltetrahydrofolate + ADP + phosphate. The protein operates within one-carbon metabolism; tetrahydrofolate interconversion. The sequence is that of Formate--tetrahydrofolate ligase 2 from Streptococcus pyogenes serotype M3 (strain ATCC BAA-595 / MGAS315).